Reading from the N-terminus, the 324-residue chain is 2,3,4,5-tetrahydropyridine-2,6-dicarboxylate N-succinyltransferase (324 aa).

Mg(2+) is bound by residues aspartate 173 and glutamate 190. Glutamate 206 functions as the Acyl-anhydride intermediate in the catalytic mechanism. Succinyl-CoA is bound by residues arginine 208, glycine 223, serine 226, alanine 249, 264–265, glycine 272, lysine 284, and 297–300; these read EA and RRNS.

The protein belongs to the type 2 tetrahydrodipicolinate N-succinyltransferase family. In terms of assembly, homotrimer.

It localises to the cytoplasm. The enzyme catalyses (S)-2,3,4,5-tetrahydrodipicolinate + succinyl-CoA + H2O = (S)-2-succinylamino-6-oxoheptanedioate + CoA. It participates in amino-acid biosynthesis; L-lysine biosynthesis via DAP pathway; LL-2,6-diaminopimelate from (S)-tetrahydrodipicolinate (succinylase route): step 1/3. Catalyzes the conversion of the cyclic tetrahydrodipicolinate (THDP) into the acyclic N-succinyl-L-2-amino-6-oxopimelate using succinyl-CoA. This is 2,3,4,5-tetrahydropyridine-2,6-dicarboxylate N-succinyltransferase from Geodermatophilus obscurus (strain ATCC 25078 / DSM 43160 / JCM 3152 / CCUG 61914 / KCC A-0152 / KCTC 9177 / NBRC 13315 / NRRL B-3577 / G-20).